Consider the following 286-residue polypeptide: Glycine--tRNA ligase alpha subunit (286 aa).

Belongs to the class-II aminoacyl-tRNA synthetase family. As to quaternary structure, tetramer of two alpha and two beta subunits.

It localises to the cytoplasm. It carries out the reaction tRNA(Gly) + glycine + ATP = glycyl-tRNA(Gly) + AMP + diphosphate. The chain is Glycine--tRNA ligase alpha subunit from Thermotoga neapolitana (strain ATCC 49049 / DSM 4359 / NBRC 107923 / NS-E).